Consider the following 253-residue polypeptide: Aminoglycoside nucleotidyltransferase (4') (253 aa).

Homodimer.

It carries out the reaction kanamycin A + ATP = 4'-adenylylkanamycin A + diphosphate. It catalyses the reaction amikacin + ATP = 4'-adenylylamikacin + diphosphate. The enzyme catalyses neomycin B + ATP = 4'-adenylylneomycin B + diphosphate. The catalysed reaction is paromomycin + ATP = 4'-adenylylparomomycin + diphosphate. It carries out the reaction ribostamycin + ATP = 4'-adenylylribostamycin + diphosphate. It catalyses the reaction tobramycin + ATP = 4'-adenylyltobramycin + diphosphate. The enzyme catalyses kanamycin A + CTP = 4'-cytidylylkanamycin A + diphosphate. The catalysed reaction is kanamycin A + GTP = 4'-guanylylkanamycin A + diphosphate. It carries out the reaction kanamycin A + ITP = 4'-inosinylylkanamycin A + diphosphate. It catalyses the reaction dTTP + kanamycin A = 4'-thymidylylkanamycin A + diphosphate. The enzyme catalyses kanamycin A + UTP = 4'-uridylylkanamycin A + diphosphate. The catalysed reaction is kanamycin A + dATP = 4'-(2'-deoxyadenylyl)kanamycin A + diphosphate. It carries out the reaction kanamycin A + dCTP = 4'-(2'-deoxycytidylyl)kanamycin A + diphosphate. It catalyses the reaction kanamycin A + dGTP = 4'-(2'-deoxyguanylyl)kanamycin A + diphosphate. The enzyme catalyses dUTP + kanamycin A = 4'-(2'-deoxyuridylyl)kanamycin A + diphosphate. The catalysed reaction is amikacin + GTP = 4'-guanylylamikacin + diphosphate. It carries out the reaction amikacin + ITP = 4'-inosinylylamikacin + diphosphate. It catalyses the reaction amikacin + CTP = 4'-cytidylylamikacin + diphosphate. The enzyme catalyses amikacin + UTP = 4'-uridylylamikacin + diphosphate. The catalysed reaction is amikacin + dTTP = 4'-thymidylylamikacin + diphosphate. In terms of biological role, inactivates aminoglycoside antibiotics such as kanamycin by catalyzing the transfer of a nucleotidyl group from nucleoside triphosphates such as (d)ATP to the 4'-hydroxyl group of the aminoglycoside. The chain is Aminoglycoside nucleotidyltransferase (4') from Bacillus sp.